Reading from the N-terminus, the 332-residue chain is Biotin synthase (332 aa).

One can recognise a Radical SAM core domain in the interval 53–282 (HFGKKVKLNM…TKEIRISGGR (230 aa)). [4Fe-4S] cluster is bound by residues cysteine 71, cysteine 75, and cysteine 78. 4 residues coordinate [2Fe-2S] cluster: cysteine 115, cysteine 147, cysteine 207, and arginine 277.

Belongs to the radical SAM superfamily. Biotin synthase family. In terms of assembly, homodimer. Requires [4Fe-4S] cluster as cofactor. It depends on [2Fe-2S] cluster as a cofactor.

The enzyme catalyses (4R,5S)-dethiobiotin + (sulfur carrier)-SH + 2 reduced [2Fe-2S]-[ferredoxin] + 2 S-adenosyl-L-methionine = (sulfur carrier)-H + biotin + 2 5'-deoxyadenosine + 2 L-methionine + 2 oxidized [2Fe-2S]-[ferredoxin]. Its pathway is cofactor biosynthesis; biotin biosynthesis; biotin from 7,8-diaminononanoate: step 2/2. Functionally, catalyzes the conversion of dethiobiotin (DTB) to biotin by the insertion of a sulfur atom into dethiobiotin via a radical-based mechanism. In Bacillus cereus (strain ATCC 14579 / DSM 31 / CCUG 7414 / JCM 2152 / NBRC 15305 / NCIMB 9373 / NCTC 2599 / NRRL B-3711), this protein is Biotin synthase.